Reading from the N-terminus, the 126-residue chain is MWKSILAIAIGAAAGALLRWFLGLRLNSLFPSLPPGTLAANLVGGYIIGVAVALFADMPMLSPLWRLLIITGFCGGLTTFSTFSAEVVDLLRQGQLQPAFAAIAVHVSGSLLMTMAGIASWQWLRR.

The next 4 membrane-spanning stretches (helical) occupy residues 4–24 (SILA…FLGL), 36–56 (GTLA…ALFA), 68–88 (LIIT…AEVV), and 99–119 (AFAA…AGIA). Na(+) is bound by residues glycine 75 and threonine 78.

Belongs to the fluoride channel Fluc/FEX (TC 1.A.43) family.

It localises to the cell inner membrane. It catalyses the reaction fluoride(in) = fluoride(out). Na(+) is not transported, but it plays an essential structural role and its presence is essential for fluoride channel function. Fluoride-specific ion channel. Important for reducing fluoride concentration in the cell, thus reducing its toxicity. This Chromobacterium violaceum (strain ATCC 12472 / DSM 30191 / JCM 1249 / CCUG 213 / NBRC 12614 / NCIMB 9131 / NCTC 9757 / MK) protein is Fluoride-specific ion channel FluC.